Consider the following 61-residue polypeptide: Short neurotoxin 2 (61 aa).

4 disulfide bridges follow: Cys-3-Cys-23, Cys-17-Cys-40, Cys-42-Cys-53, and Cys-54-Cys-59.

The protein belongs to the three-finger toxin family. Short-chain subfamily. Type I alpha-neurotoxin sub-subfamily. In terms of tissue distribution, expressed by the venom gland.

It is found in the secreted. Its function is as follows. Binds to muscle nicotinic acetylcholine receptor (nAChR) and inhibit acetylcholine from binding to the receptor, thereby impairing neuromuscular transmission. This chain is Short neurotoxin 2, found in Naja annulifera (Banded Egyptian cobra).